A 412-amino-acid polypeptide reads, in one-letter code: Yellow-related salivary protein LJM17 (412 aa).

The first 18 residues, 1 to 18, serve as a signal peptide directing secretion; sequence MRFFFVFLAIVLFQGIHG. Asn29 carries an N-linked (GlcNAc...) asparagine glycan.

It belongs to the major royal jelly protein family. As to expression, salivary gland.

It is found in the secreted. Functionally, probably modulates blood feeding of sand flies on vertebrate species by binding and sequestering different mediators involved in the host response. Binds biogenic amines. Binds serotonin with high affinity. Binds noradrenaline but not adrenaline. Binds dopamine and octopamine. Binds histamine. Inhibits host smooth muscle contraction induced by histamine in bioassay with guinea pig ileum. Immunogenic; elicits antibody production in the host. Functions as a chemoattractant for host neutrophils; likely acts through a G-protein-coupled receptor and effect is dependent on calcium influx. This chain is Yellow-related salivary protein LJM17, found in Lutzomyia longipalpis (Sand fly).